A 404-amino-acid polypeptide reads, in one-letter code: Tryptophan synthase beta chain (404 aa).

Lysine 94 is subject to N6-(pyridoxal phosphate)lysine.

It belongs to the TrpB family. As to quaternary structure, tetramer of two alpha and two beta chains. Pyridoxal 5'-phosphate is required as a cofactor.

The catalysed reaction is (1S,2R)-1-C-(indol-3-yl)glycerol 3-phosphate + L-serine = D-glyceraldehyde 3-phosphate + L-tryptophan + H2O. It participates in amino-acid biosynthesis; L-tryptophan biosynthesis; L-tryptophan from chorismate: step 5/5. Functionally, the beta subunit is responsible for the synthesis of L-tryptophan from indole and L-serine. The polypeptide is Tryptophan synthase beta chain (Staphylococcus aureus (strain USA300)).